We begin with the raw amino-acid sequence, 476 residues long: NADH-quinone oxidoreductase subunit N (476 aa).

Helical transmembrane passes span 8–28 (ITTE…GLLV), 35–55 (GLGS…IINW), 71–91 (YATF…LGSF), 102–122 (FEYY…ASAG), 124–144 (FITL…LVAF), 159–179 (ILLA…VYGA), 201–221 (LIVG…AVPF), 239–259 (FLAV…FAGG), 267–287 (WTLL…LVAI), 295–315 (MLAY…VSAT), 322–342 (VMFY…VVAI), 366–386 (ASVM…AGFV), 405–425 (LGLI…LVMF), and 437–457 (VGGA…ILGI).

Belongs to the complex I subunit 2 family. As to quaternary structure, NDH-1 is composed of 14 different subunits. Subunits NuoA, H, J, K, L, M, N constitute the membrane sector of the complex.

It is found in the cell membrane. The catalysed reaction is a quinone + NADH + 5 H(+)(in) = a quinol + NAD(+) + 4 H(+)(out). Functionally, NDH-1 shuttles electrons from NADH, via FMN and iron-sulfur (Fe-S) centers, to quinones in the respiratory chain. The immediate electron acceptor for the enzyme in this species is believed to be a menaquinone. Couples the redox reaction to proton translocation (for every two electrons transferred, four hydrogen ions are translocated across the cytoplasmic membrane), and thus conserves the redox energy in a proton gradient. The polypeptide is NADH-quinone oxidoreductase subunit N (Desulforamulus reducens (strain ATCC BAA-1160 / DSM 100696 / MI-1) (Desulfotomaculum reducens)).